The sequence spans 422 residues: Mannose-1-phosphate guanylyltransferase regulatory subunit alpha-B (422 aa).

The tract at residues 2–253 is substrate-binding domain; sequence LKAIILIGGP…QHFWSQIKSA (252 aa). Residues Glu-85 and Gln-249 each coordinate GDP-alpha-D-mannose. A hexapeptide repeat domain region spans residues 275 to 422; it reads LATNQGGTPK…NRSFKNQIIL (148 aa). The interval 358-386 is C-loop; the sequence is TPSDPNPNDPYAKIDSETLFRDGGLTPSI.

This sequence belongs to the transferase hexapeptide repeat family. Component of the GMPPA-GMPPB mannose-1-phosphate guanylyltransferase complex composed of 4 GMPPA subunits and 8 GMPPB subunits; the complex is organized into three layers, a central layer made up of 2 GMPPA dimers sandwiched between two layers each made up of 2 GMPPB dimers.

It participates in nucleotide-sugar biosynthesis; GDP-alpha-D-mannose biosynthesis; GDP-alpha-D-mannose from alpha-D-mannose 1-phosphate (GTP route): step 1/1. In terms of biological role, regulatory subunit of the GMPPA-GMPPB mannose-1-phosphate guanylyltransferase complex; reduces the catalytic activity of GMPPB when part of the complex. Mediates allosteric feedback inhibition of GMPPB catalytic activity upon binding GDP-alpha-D-mannose. Together with GMPPB regulates GDP-alpha-D-mannose levels. One of two paralogs (gmppaa and gmppab) that may have redundant functions. The polypeptide is Mannose-1-phosphate guanylyltransferase regulatory subunit alpha-B (gmppab) (Danio rerio (Zebrafish)).